A 196-amino-acid polypeptide reads, in one-letter code: Nucleoside triphosphate pyrophosphatase (196 aa).

The active-site Proton acceptor is the Asp-70.

Belongs to the Maf family. A divalent metal cation serves as cofactor.

It localises to the cytoplasm. The catalysed reaction is a ribonucleoside 5'-triphosphate + H2O = a ribonucleoside 5'-phosphate + diphosphate + H(+). It carries out the reaction a 2'-deoxyribonucleoside 5'-triphosphate + H2O = a 2'-deoxyribonucleoside 5'-phosphate + diphosphate + H(+). Functionally, nucleoside triphosphate pyrophosphatase. May have a dual role in cell division arrest and in preventing the incorporation of modified nucleotides into cellular nucleic acids. The chain is Nucleoside triphosphate pyrophosphatase from Gloeothece citriformis (strain PCC 7424) (Cyanothece sp. (strain PCC 7424)).